Reading from the N-terminus, the 109-residue chain is Lipoprotein BsmA (109 aa).

The N-terminal stretch at M1–A24 is a signal peptide. C25 carries the N-palmitoyl cysteine lipid modification. C25 is lipidated: S-diacylglycerol cysteine.

Belongs to the BhsA/McbA family.

It is found in the cell membrane. Its function is as follows. Involved in protection of biofilms against oxidative stress. The chain is Lipoprotein BsmA (bsmA) from Escherichia coli (strain K12).